A 1238-amino-acid polypeptide reads, in one-letter code: ATP-dependent helicase/nuclease subunit A (1238 aa).

A UvrD-like helicase ATP-binding domain is found at 6–474; that stretch reads TKWTETQKSA…IKLSENFRSR (469 aa). ATP is bound at residue 27 to 34; that stretch reads AGAGTGKT. The UvrD-like helicase C-terminal domain maps to 512–811; sequence PFEGNCGGDV…RIMSIHKSKG (300 aa).

The protein belongs to the helicase family. AddA subfamily. As to quaternary structure, heterodimer of AddA and AddB/RexB. Mg(2+) is required as a cofactor.

The catalysed reaction is Couples ATP hydrolysis with the unwinding of duplex DNA by translocating in the 3'-5' direction.. It carries out the reaction ATP + H2O = ADP + phosphate + H(+). The heterodimer acts as both an ATP-dependent DNA helicase and an ATP-dependent, dual-direction single-stranded exonuclease. Recognizes the chi site generating a DNA molecule suitable for the initiation of homologous recombination. The AddA nuclease domain is required for chi fragment generation; this subunit has the helicase and 3' -&gt; 5' nuclease activities. The protein is ATP-dependent helicase/nuclease subunit A of Clostridium kluyveri (strain NBRC 12016).